A 557-amino-acid chain; its full sequence is D-arabinono-1,4-lactone oxidase (557 aa).

Positions 26–209 (FFCKPQAIFQ…THVTLRTIPK (184 aa)) constitute an FAD-binding PCMH-type domain. Residue histidine 63 is modified to Pros-8alpha-FAD histidine.

This sequence belongs to the oxygen-dependent FAD-linked oxidoreductase family. Requires FAD as cofactor.

Its subcellular location is the mitochondrion membrane. The catalysed reaction is D-arabinono-1,4-lactone + O2 = dehydro-D-arabinono-1,4-lactone + H2O2 + H(+). It participates in cofactor biosynthesis; D-erythroascorbate biosynthesis; dehydro-D-arabinono-1,4-lactone from D-arabinose: step 2/2. In Debaryomyces hansenii (strain ATCC 36239 / CBS 767 / BCRC 21394 / JCM 1990 / NBRC 0083 / IGC 2968) (Yeast), this protein is D-arabinono-1,4-lactone oxidase (ALO1).